We begin with the raw amino-acid sequence, 626 residues long: Methanol dehydrogenase [cytochrome c] subunit 1 (626 aa).

The first 27 residues, Met-1–Ala-27, serve as a signal peptide directing secretion. Cys-130 and Cys-131 are joined by a disulfide. Ca(2+) is bound by residues Glu-204 and Asn-288. Asp-330 serves as the catalytic Proton acceptor. Cys-413 and Cys-442 are disulfide-bonded.

Belongs to the bacterial PQQ dehydrogenase family. In terms of assembly, heterotetramer composed of 2 alpha and 2 beta subunits. Pyrroloquinoline quinone is required as a cofactor. The cofactor is Ca(2+).

It localises to the cell inner membrane. The enzyme catalyses 2 Fe(III)-[cytochrome cL] + a primary alcohol = 2 Fe(II)-[cytochrome cL] + an aldehyde + 2 H(+). Functionally, catalyzes the oxidation of primary alcohols including methanol. The polypeptide is Methanol dehydrogenase [cytochrome c] subunit 1 (moxF) (Methylorubrum extorquens (strain ATCC 14718 / DSM 1338 / JCM 2805 / NCIMB 9133 / AM1) (Methylobacterium extorquens)).